Consider the following 424-residue polypeptide: Tyrosine--tRNA ligase (424 aa).

Tyrosine 37 is a binding site for L-tyrosine. The 'HIGH' region signature appears at 42-51 (PTADSLHLGH). 2 residues coordinate L-tyrosine: tyrosine 175 and glutamine 179. Positions 235 to 239 (KFGKT) match the 'KMSKS' region motif. ATP is bound at residue lysine 238. The region spanning 357–414 (ADLQQALVAAELVPSRGQARTLISSNAVSVNGEKQASIDYVFDDADRLYSRYTLLRRG) is the S4 RNA-binding domain.

This sequence belongs to the class-I aminoacyl-tRNA synthetase family. TyrS type 1 subfamily. Homodimer.

The protein resides in the cytoplasm. It carries out the reaction tRNA(Tyr) + L-tyrosine + ATP = L-tyrosyl-tRNA(Tyr) + AMP + diphosphate + H(+). In terms of biological role, catalyzes the attachment of tyrosine to tRNA(Tyr) in a two-step reaction: tyrosine is first activated by ATP to form Tyr-AMP and then transferred to the acceptor end of tRNA(Tyr). This is Tyrosine--tRNA ligase from Sodalis glossinidius (strain morsitans).